We begin with the raw amino-acid sequence, 566 residues long: Sodium-dependent high-affinity dicarboxylate transporter 3 (566 aa).

12 helical membrane-spanning segments follow: residues 55 to 75 (LVLV…GPEW), 92 to 112 (VMPL…VGVL), 123 to 139 (NDTN…AAAV), 162 to 182 (WIML…SNTA), 219 to 239 (MATG…TGTA), 268 to 288 (WIFF…MTLV), 329 to 349 (ILLS…GVFF), 352 to 372 (GAYT…VLPS), 400 to 420 (ETFP…AAGV), 439 to 459 (LPLW…TNIC), 496 to 516 (FAFI…SGMV), and 521 to 541 (MAFV…LYMN).

It belongs to the SLC13A/DASS transporter (TC 2.A.47) family. NADC subfamily. Nad-1 and nad-2 are coexpressed in the intestinal tract from early larvae to adults, expression is from the pharynx through to the anus. Expression level is significantly greater in the anterior half of the intestine than in the posterior half.

Its subcellular location is the membrane. Its function is as follows. High-affinity sodium-dicarboxylate cotransporter that accepts a range of tricarboxylic acid-cycle intermediates with 4-5 carbon atoms. There is no interaction with monocarboxylates. Plays a role in the regulation of life span. The chain is Sodium-dependent high-affinity dicarboxylate transporter 3 (nac-3) from Caenorhabditis elegans.